The following is a 387-amino-acid chain: 3-ketoacyl-CoA thiolase (387 aa).

Cys-91 functions as the Acyl-thioester intermediate in the catalytic mechanism. Active-site proton acceptor residues include His-343 and Cys-373.

Belongs to the thiolase-like superfamily. Thiolase family. In terms of assembly, heterotetramer of two alpha chains (FadB) and two beta chains (FadA).

The protein resides in the cytoplasm. The catalysed reaction is an acyl-CoA + acetyl-CoA = a 3-oxoacyl-CoA + CoA. The protein operates within lipid metabolism; fatty acid beta-oxidation. In terms of biological role, catalyzes the final step of fatty acid oxidation in which acetyl-CoA is released and the CoA ester of a fatty acid two carbons shorter is formed. The polypeptide is 3-ketoacyl-CoA thiolase (Escherichia coli (strain UTI89 / UPEC)).